We begin with the raw amino-acid sequence, 159 residues long: Mesogenin-1 (159 aa).

The segment at Pro79–Ser101 is disordered. Positions Lys86–Ala100 are enriched in basic residues. The bHLH domain occupies Gln95–Leu149.

It localises to the nucleus. In terms of biological role, involved in specifying the paraxial, but not dorsal, mesoderm. May regulate the expression of T-box transcription factors required for mesoderm formation and differentiation. In Gallus gallus (Chicken), this protein is Mesogenin-1 (MSGN1).